The primary structure comprises 1002 residues: Glutamate receptor ionotropic, NMDA 3B (1002 aa).

The first 24 residues, 1-24 (MESVRTLWLSVALALAVGSRVVRG), serve as a signal peptide directing secretion. At 25–574 (HPQPCRVPTR…PIGAFMWPLH (550 aa)) the chain is on the extracellular side. Asn-69, Asn-212, Asn-344, Asn-451, and Asn-465 each carry an N-linked (GlcNAc...) asparagine glycan. 2 disulfides stabilise this stretch: Cys-439/Cys-475 and Cys-445/Cys-476. 3 residues coordinate glycine: Ser-531, Ser-533, and Arg-538. Residues Ser-533 and Arg-538 each coordinate D-serine. A helical transmembrane segment spans residues 575 to 594 (WSMWVGVFAALHLTALFLTL). The Cytoplasmic portion of the chain corresponds to 595 to 615 (YEWRSPYGLTPRGRNRGTVFS). Residues 616 to 627 (YSSALNLCYAIL) constitute an intramembrane region (discontinuously helical). Residues 628–641 (FGRTVSSKTPKCPT) lie on the Cytoplasmic side of the membrane. The chain crosses the membrane as a helical span at residues 642–661 (GRFLMNLWAIFCLLVLSSYT). At 662–832 (ANLAAVMVGD…TLQMGVYHFS (171 aa)) the chain is on the extracellular side. A glycine-binding site is contributed by Ser-701. Residues Ser-701, Ala-702, and Asp-745 each contribute to the D-serine site. Asp-745 contacts glycine. The N-linked (GlcNAc...) asparagine glycan is linked to Asn-786. A helical membrane pass occupies residues 833–848 (GLFVLLCLGLGSALLT). The Cytoplasmic segment spans residues 849-1002 (SLGEHVFYRL…RLLHAAPAES (154 aa)). Residues 882-910 (ALNTGPPEGQQERAEQERSGPKDELPATD) are disordered. Residues 891–906 (QQERAEQERSGPKDEL) are compositionally biased toward basic and acidic residues. Residues 944-985 (LCSNGPGLQAELRELELRIEAARERLRSALLRRGELRALLGD) are a coiled coil. An involved in the trafficking and surface expression of NMDARs region spans residues 951–984 (LQAELRELELRIEAARERLRSALLRRGELRALLG).

Belongs to the glutamate-gated ion channel (TC 1.A.10.1) family. NR3B/GRIN3B subfamily. Forms heterotetrameric channels that contain at least two GluN1 subunits and at least a combination of one GluN2 and one GluN3 subunits (in vitro). Forms heterotetrameric channels composed of two GluN1/zeta subunits (GRIN1), and two identical GluN3 subunits (GRIN3A or GRIN3B) (in vitro). Does not form functional homomeric channels. In terms of tissue distribution, expressed in the hippocampus, the corpus callosum, in the facial and trigeminal nuclei of the brainstem and the ventral horn of the spinal cord.

It localises to the cell membrane. It is found in the postsynaptic cell membrane. It catalyses the reaction Ca(2+)(in) = Ca(2+)(out). The catalysed reaction is Na(+)(in) = Na(+)(out). Excitatory glycine receptors are inhibited by D-serine at a concentrion of 100uM. In terms of biological role, component of a non-conventional N-methyl-D-aspartate (NMDA) receptors (NMDARs) that function as heterotetrameric, ligand-gated cation channels with low calcium permeability and low voltage-dependent block by Mg(2+). Forms glutamatergic receptor complexes with GluN1 and GluN2 subunits which are activated by glycine binding to the GluN1 and GluN3 subunits and L-glutamate binding to GluN2 subunits. Forms excitatory glycinergic receptor complexes with GluN1 alone which are activated by glycine binding to the GluN1 and GluN3 subunits. GluN3B subunit also binds D-serine and, in the absence of glycine, activates glycinergic receptor complexes, but with lower efficacy than glycine. Each GluN3 subunit confers differential attributes to channel properties, including activation, deactivation and desensitization kinetics, pH sensitivity, Ca2(+) permeability, and binding to allosteric modulators. This Rattus norvegicus (Rat) protein is Glutamate receptor ionotropic, NMDA 3B.